Reading from the N-terminus, the 442-residue chain is Trigger factor (442 aa).

The region spanning 176–259 (GDFISLSLYV…VNAVIEISSP (84 aa)) is the PPIase FKBP-type domain.

The protein belongs to the FKBP-type PPIase family. Tig subfamily.

It localises to the cytoplasm. It catalyses the reaction [protein]-peptidylproline (omega=180) = [protein]-peptidylproline (omega=0). Functionally, involved in protein export. Acts as a chaperone by maintaining the newly synthesized protein in an open conformation. Functions as a peptidyl-prolyl cis-trans isomerase. The chain is Trigger factor from Chlamydia trachomatis serovar A (strain ATCC VR-571B / DSM 19440 / HAR-13).